We begin with the raw amino-acid sequence, 134 residues long: Small ribosomal subunit protein uS8c (134 aa).

The protein belongs to the universal ribosomal protein uS8 family. Part of the 30S ribosomal subunit.

The protein resides in the plastid. Its subcellular location is the chloroplast. Its function is as follows. One of the primary rRNA binding proteins, it binds directly to 16S rRNA central domain where it helps coordinate assembly of the platform of the 30S subunit. The polypeptide is Small ribosomal subunit protein uS8c (rps8) (Lepidium virginicum (Virginia pepperweed)).